Here is a 255-residue protein sequence, read N- to C-terminus: 4-hydroxy-tetrahydrodipicolinate reductase (255 aa).

Residues 9 to 14 (GYRGKM), 89 to 91 (GTT), and 115 to 118 (APNF) each bind NAD(+). His-145 acts as the Proton donor/acceptor in catalysis. His-146 provides a ligand contact to (S)-2,3,4,5-tetrahydrodipicolinate. Lys-149 acts as the Proton donor in catalysis. 155-156 (GT) contributes to the (S)-2,3,4,5-tetrahydrodipicolinate binding site.

This sequence belongs to the DapB family.

Its subcellular location is the cytoplasm. It catalyses the reaction (S)-2,3,4,5-tetrahydrodipicolinate + NAD(+) + H2O = (2S,4S)-4-hydroxy-2,3,4,5-tetrahydrodipicolinate + NADH + H(+). It carries out the reaction (S)-2,3,4,5-tetrahydrodipicolinate + NADP(+) + H2O = (2S,4S)-4-hydroxy-2,3,4,5-tetrahydrodipicolinate + NADPH + H(+). It functions in the pathway amino-acid biosynthesis; L-lysine biosynthesis via DAP pathway; (S)-tetrahydrodipicolinate from L-aspartate: step 4/4. Functionally, catalyzes the conversion of 4-hydroxy-tetrahydrodipicolinate (HTPA) to tetrahydrodipicolinate. In Streptococcus uberis (strain ATCC BAA-854 / 0140J), this protein is 4-hydroxy-tetrahydrodipicolinate reductase.